Consider the following 493-residue polypeptide: Glycerol kinase (493 aa).

Thr11 provides a ligand contact to ADP. ATP is bound by residues Thr11, Thr12, and Ser13. Thr11 contacts sn-glycerol 3-phosphate. Residue Arg15 participates in ADP binding. The sn-glycerol 3-phosphate site is built by Arg80, Glu81, Tyr132, and Asp241. The glycerol site is built by Arg80, Glu81, Tyr132, Asp241, and Gln242. Residues Thr263 and Gly306 each coordinate ADP. Thr263, Gly306, Gln310, and Gly408 together coordinate ATP. Position 408 (Gly408) interacts with ADP.

This sequence belongs to the FGGY kinase family.

The enzyme catalyses glycerol + ATP = sn-glycerol 3-phosphate + ADP + H(+). It functions in the pathway polyol metabolism; glycerol degradation via glycerol kinase pathway; sn-glycerol 3-phosphate from glycerol: step 1/1. Inhibited by fructose 1,6-bisphosphate (FBP). In terms of biological role, key enzyme in the regulation of glycerol uptake and metabolism. Catalyzes the phosphorylation of glycerol to yield sn-glycerol 3-phosphate. The sequence is that of Glycerol kinase from Cereibacter sphaeroides (strain ATCC 17023 / DSM 158 / JCM 6121 / CCUG 31486 / LMG 2827 / NBRC 12203 / NCIMB 8253 / ATH 2.4.1.) (Rhodobacter sphaeroides).